A 540-amino-acid chain; its full sequence is Mitochondrial distribution and morphology protein 34 (540 aa).

The SMP-LTD domain occupies 1–208 (MSFKFNSGTF…LPSVIFNMSQ (208 aa)). Disordered stretches follow at residues 26–51 (ALNP…KKPK) and 379–399 (RSKS…SGSL). Residues 35-44 (PESTSGQDGS) show a composition bias toward polar residues.

This sequence belongs to the MDM34 family. As to quaternary structure, component of the ER-mitochondria encounter structure (ERMES) or MDM complex, composed of MMM1, MDM10, MDM12 and MDM34.

Its subcellular location is the mitochondrion outer membrane. Component of the ERMES/MDM complex, which serves as a molecular tether to connect the endoplasmic reticulum (ER) and mitochondria. Components of this complex are involved in the control of mitochondrial shape and protein biogenesis, and function in nonvesicular lipid trafficking between the ER and mitochondria. MDM34 is required for the interaction of the ER-resident membrane protein MMM1 and the outer mitochondrial membrane-resident beta-barrel protein MDM10. The sequence is that of Mitochondrial distribution and morphology protein 34 from Kluyveromyces lactis (strain ATCC 8585 / CBS 2359 / DSM 70799 / NBRC 1267 / NRRL Y-1140 / WM37) (Yeast).